Here is a 435-residue protein sequence, read N- to C-terminus: F-box/FBD/LRR-repeat protein At1g51370 (435 aa).

Residues 18-64 enclose the F-box domain; sequence EDRISQLPEPLISEILFHLSTKDSVRTSALSTKWRYLWQSVPGLDLD. 5 LRR repeats span residues 123-148, 170-195, 234-259, 262-287, and 314-340; these read VHCFHDNKIPLSIYTCTTLVHLRLRW, VSYPNETTLQKLISGSPVLEELILFS, AKMYSTKNFQIISSGFPAKLDIDFVN, GRYQKKKVIEDILIDISRVRDLVISS, and RFYISDLEMLPTLLESCPKLESLILEM. The FBD domain occupies 354 to 406; the sequence is EPNVMVSTVPWCLVSSLKFVELKRSIPRYEGEMELVRYVLTNSTVLKKLRLNV.

The sequence is that of F-box/FBD/LRR-repeat protein At1g51370 from Arabidopsis thaliana (Mouse-ear cress).